We begin with the raw amino-acid sequence, 96 residues long: Cytochrome c2 iso-2 (96 aa).

Heme c contacts are provided by Cys-10, Cys-13, His-14, and Met-75.

It belongs to the cytochrome c family. Post-translationally, binds 1 heme c group covalently per subunit.

Its function is as follows. Cytochrome c2 is found mainly in purple, non-sulfur, photosynthetic bacteria where it functions as the electron donor to the oxidized bacteriochlorophyll in the photophosphorylation pathway. However, it may also have a role in the respiratory chain and is found in some non-photosynthetic bacteria. In Magnetospirillum fulvum (Rhodospirillum fulvum), this protein is Cytochrome c2 iso-2.